The sequence spans 225 residues: 7-cyano-7-deazaguanine synthase (225 aa).

9 to 19 (YSGGLDSTTCL) serves as a coordination point for ATP. Residues Cys188, Cys198, Cys201, and Cys204 each coordinate Zn(2+).

The protein belongs to the QueC family. Requires Zn(2+) as cofactor.

The catalysed reaction is 7-carboxy-7-deazaguanine + NH4(+) + ATP = 7-cyano-7-deazaguanine + ADP + phosphate + H2O + H(+). It functions in the pathway purine metabolism; 7-cyano-7-deazaguanine biosynthesis. In terms of biological role, catalyzes the ATP-dependent conversion of 7-carboxy-7-deazaguanine (CDG) to 7-cyano-7-deazaguanine (preQ(0)). In Citrifermentans bemidjiense (strain ATCC BAA-1014 / DSM 16622 / JCM 12645 / Bem) (Geobacter bemidjiensis), this protein is 7-cyano-7-deazaguanine synthase.